The sequence spans 239 residues: MSAASVSKVVVVFSGGQDSTTCLIQALTQFDEVHGITFDYGQRHREEIEVAKSLAKRLKITSHKVMDVSLLNELAISALTRDAIPVSHELMENGLPNTFVPGRNILFLTLAGIFAYQLGAEAIITGVCETDFSGYPDCRHDFVRAMESALVQGMDKKLEIITPLMWLNKAQTWALADKYQQLDLVRHHTLTCYNGIVGDGCGDCPACHLRKRGLEDYLQNKAEVMASLDKATATGKPQA.

An ATP-binding site is contributed by 13–23 (FSGGQDSTTCL). Zn(2+) is bound by residues cysteine 192, cysteine 201, cysteine 204, and cysteine 207.

It belongs to the QueC family. Zn(2+) is required as a cofactor.

It catalyses the reaction 7-carboxy-7-deazaguanine + NH4(+) + ATP = 7-cyano-7-deazaguanine + ADP + phosphate + H2O + H(+). Its pathway is purine metabolism; 7-cyano-7-deazaguanine biosynthesis. Its function is as follows. Catalyzes the ATP-dependent conversion of 7-carboxy-7-deazaguanine (CDG) to 7-cyano-7-deazaguanine (preQ(0)). The chain is 7-cyano-7-deazaguanine synthase from Shewanella sp. (strain MR-7).